Reading from the N-terminus, the 185-residue chain is uncharacterized protein (185 aa).

The protein to M.thermoautotrophicum MTH236.

This is an uncharacterized protein from Methanocaldococcus jannaschii (strain ATCC 43067 / DSM 2661 / JAL-1 / JCM 10045 / NBRC 100440) (Methanococcus jannaschii).